Reading from the N-terminus, the 252-residue chain is Large ribosomal subunit protein uL3 (252 aa).

At Gln-169 the chain carries N5-methylglutamine.

The protein belongs to the universal ribosomal protein uL3 family. As to quaternary structure, part of the 50S ribosomal subunit. Forms a cluster with proteins L14 and L19. Post-translationally, methylated by PrmB.

In terms of biological role, one of the primary rRNA binding proteins, it binds directly near the 3'-end of the 23S rRNA, where it nucleates assembly of the 50S subunit. The protein is Large ribosomal subunit protein uL3 of Hyphomonas neptunium (strain ATCC 15444).